The following is a 304-amino-acid chain: Aspartate carbamoyltransferase catalytic subunit (304 aa).

Residues Arg-49 and Thr-50 each coordinate carbamoyl phosphate. Lys-77 is a binding site for L-aspartate. Arg-99, His-127, and Gln-130 together coordinate carbamoyl phosphate. 2 residues coordinate L-aspartate: Arg-160 and Arg-211. Carbamoyl phosphate is bound by residues Ala-252 and Pro-253.

The protein belongs to the aspartate/ornithine carbamoyltransferase superfamily. ATCase family. In terms of assembly, heterododecamer (2C3:3R2) of six catalytic PyrB chains organized as two trimers (C3), and six regulatory PyrI chains organized as three dimers (R2).

It catalyses the reaction carbamoyl phosphate + L-aspartate = N-carbamoyl-L-aspartate + phosphate + H(+). It functions in the pathway pyrimidine metabolism; UMP biosynthesis via de novo pathway; (S)-dihydroorotate from bicarbonate: step 2/3. In terms of biological role, catalyzes the condensation of carbamoyl phosphate and aspartate to form carbamoyl aspartate and inorganic phosphate, the committed step in the de novo pyrimidine nucleotide biosynthesis pathway. The protein is Aspartate carbamoyltransferase catalytic subunit of Bacillus cereus (strain G9842).